A 375-amino-acid polypeptide reads, in one-letter code: Killer cell immunoglobulin-like receptor 2DL5B (375 aa).

The N-terminal stretch at 1–21 (MSLMVVSMACVGFFLLQGAWT) is a signal peptide. Residues 22-238 (HEGGQDKPLL…PSSKTGIRRH (217 aa)) are Extracellular-facing. 2 consecutive Ig-like C2-type domains span residues 42–102 (GGHV…HPRS) and 137–200 (GENV…LHDS). 2 disulfides stabilise this stretch: Cys49–Cys95 and Cys144–Cys193. Residues 213 to 233 (VSVTGNSSSSSSSPTEPSSKT) are disordered. N-linked (GlcNAc...) asparagine glycosylation occurs at Asn218. A compositionally biased stretch (low complexity) spans 219–231 (SSSSSSSPTEPSS). A helical membrane pass occupies residues 239-259 (LHILIGTSVAIILFIILFFFL). The Cytoplasmic segment spans residues 260–375 (LHCCCSNKKN…ASSHVPAAGI (116 aa)). The tract at residues 334-375 (AKPRSLSPAHKHHSQALRGSSRETTALSQNRVASSHVPAAGI) is disordered. Over residues 355–366 (RETTALSQNRVA) the composition is skewed to polar residues.

The protein belongs to the immunoglobulin superfamily.

The protein resides in the cell membrane. Its function is as follows. Receptor on natural killer (NK) cells for HLA-C alleles. Inhibits the activity of NK cells thus preventing cell lysis. The sequence is that of Killer cell immunoglobulin-like receptor 2DL5B (KIR2DL5B) from Homo sapiens (Human).